The sequence spans 1233 residues: Mitogen-activated protein kinase kinase kinase kinase 4 (1233 aa).

At A2 the chain carries N-acetylalanine. S5 is subject to Phosphoserine. The 265-residue stretch at 25 to 289 (FELVEVVGNG…EQLLKHPFIR (265 aa)) folds into the Protein kinase domain. Residues 31–39 (VGNGTYGQV) and K53 each bind ATP. D152 functions as the Proton acceptor in the catalytic mechanism. 3 disordered regions span residues 305 to 348 (IDRT…VPGE), 401 to 463 (QKEQ…VERE), and 489 to 805 (QAML…ETES). The span at 316–337 (DETEYEYSGSEEEEEEVPEQEG) shows a compositional bias: acidic residues. Residues S323 and S325 each carry the phosphoserine modification. Residues 521–537 (PEPKPHYDPADRAREVQ) show a composition bias toward basic and acidic residues. At S543 the chain carries Phosphoserine. A compositionally biased stretch (polar residues) spans 544–559 (LKNNVSPVSRSHSFSD). Phosphoserine is present on residues S619, S621, S629, and S646. Positions 654 to 663 (LLWERVEKLV) are enriched in basic and acidic residues. Over residues 666-692 (PGSGSSSGSSNSGSQPGSHPGSQSGSG) the composition is skewed to low complexity. S691, S703, and S706 each carry phosphoserine. Basic and acidic residues-rich tracts occupy residues 713 to 726 (SAAK…EVFR) and 741 to 756 (KELR…HKVT). Residues 766–781 (GTTDEEEEDVEQEGAD) are compositionally biased toward acidic residues. Positions 783–803 (STSGPEDTRAASSPNLSNGET) are enriched in polar residues. Residues S785, S794, S795, S799, and S817 each carry the phosphoserine modification. Residue T822 is modified to Phosphothreonine. Residues S846, S849, S894, and S907 each carry the phosphoserine modification. Residues 852–1206 (PFIDPRLLQI…LKFLCGRNDK (355 aa)) form a mediates interaction with RAP2A region. The CNH domain maps to 920-1207 (NSEILCAALW…KFLCGRNDKV (288 aa)).

Belongs to the protein kinase superfamily. STE Ser/Thr protein kinase family. STE20 subfamily. As to quaternary structure, interacts with the SH3 domain of the adapter proteins Nck. Interacts (via its CNH regulatory domain) with ATL1 (via the N-terminal region). Interacts with RAP2A (GTP-bound form preferentially). The cofactor is Mg(2+). In terms of tissue distribution, appears to be ubiquitous, expressed in all tissue types examined. Highest levels observed in heart and brain.

It localises to the cytoplasm. It carries out the reaction L-seryl-[protein] + ATP = O-phospho-L-seryl-[protein] + ADP + H(+). The enzyme catalyses L-threonyl-[protein] + ATP = O-phospho-L-threonyl-[protein] + ADP + H(+). Serine/threonine kinase that plays a role in the response to environmental stress and cytokines such as TNF-alpha. Appears to act upstream of the JUN N-terminal pathway. Activator of the Hippo signaling pathway which plays a pivotal role in organ size control and tumor suppression by restricting proliferation and promoting apoptosis. MAP4Ks act in parallel to and are partially redundant with STK3/MST2 and STK4/MST2 in the phosphorylation and activation of LATS1/2, and establish MAP4Ks as components of the expanded Hippo pathway. Phosphorylates SMAD1 on Thr-322. In Mus musculus (Mouse), this protein is Mitogen-activated protein kinase kinase kinase kinase 4 (Map4k4).